We begin with the raw amino-acid sequence, 363 residues long: F-box protein At3g44326 (363 aa).

The disordered stretch occupies residues Met-1 to Ala-23. The 40-residue stretch at Asp-27–Cys-66 folds into the F-box domain.

The polypeptide is F-box protein At3g44326 (Arabidopsis thaliana (Mouse-ear cress)).